A 225-amino-acid polypeptide reads, in one-letter code: Uracil-DNA glycosylase (225 aa).

Asp64 acts as the Proton acceptor in catalysis.

The protein belongs to the uracil-DNA glycosylase (UDG) superfamily. UNG family.

Its subcellular location is the cytoplasm. It catalyses the reaction Hydrolyzes single-stranded DNA or mismatched double-stranded DNA and polynucleotides, releasing free uracil.. In terms of biological role, excises uracil residues from the DNA which can arise as a result of misincorporation of dUMP residues by DNA polymerase or due to deamination of cytosine. This Lachnoclostridium phytofermentans (strain ATCC 700394 / DSM 18823 / ISDg) (Clostridium phytofermentans) protein is Uracil-DNA glycosylase.